The sequence spans 320 residues: Heterogeneous nuclear ribonucleoprotein A1-like 3 (320 aa).

RRM domains lie at 14–97 and 105–184; these read RKLF…DSQR and KKIF…LSKQ. Disordered regions lie at residues 182 to 218 and 271 to 320; these read SKQE…NFGR and SNFG…GRRF. Gly residues predominate over residues 197-218; sequence SGSGNFGGGRGGGFGGNDNFGR. Over residues 308–320 the composition is skewed to low complexity; that stretch reads SSSSSSYGSGRRF.

The chain is Heterogeneous nuclear ribonucleoprotein A1-like 3 from Homo sapiens (Human).